We begin with the raw amino-acid sequence, 238 residues long: Monocyte to macrophage differentiation factor (238 aa).

Residues 1 to 28 are Cytoplasmic-facing; it reads MRFRNRFQRFMNHRAPANGRYKPTCYEH. The chain crosses the membrane as a helical span at residues 29 to 49; that stretch reads AANCYTHAFLIVPAIVGSALL. The Lumenal portion of the chain corresponds to 50 to 61; that stretch reads HRLSDDCWEKIT. The chain crosses the membrane as a helical span at residues 62-82; sequence AWIYGMGLCALFIVSTVFHIV. Residues 83–101 are Cytoplasmic-facing; the sequence is SWKKSHLRTVEHCFHMCDR. A helical membrane pass occupies residues 102–122; sequence MVIYFFIAASYAPWLNLRELG. Position 123 (Pro-123) is a topological domain, lumenal. Residues 124–144 form a helical membrane-spanning segment; the sequence is LASHMRWFIWLMAAGGTIYVF. The Cytoplasmic portion of the chain corresponds to 145–151; that stretch reads LYHEKYK. A helical transmembrane segment spans residues 152–172; the sequence is VVELFFYLTMGFSPALVVTSM. Topologically, residues 173–174 are lumenal; the sequence is NN. Residues 175–195 traverse the membrane as a helical segment; that stretch reads TDGLQELACGGLIYCLGVVFF. The Cytoplasmic portion of the chain corresponds to 196–198; it reads KSD. Residues 199-219 traverse the membrane as a helical segment; sequence GIIPFAHAIWHLFVATAAAVH. Residues 220 to 238 are Lumenal-facing; it reads YYAIWKYLYRSPTDFIRHL.

It belongs to the ADIPOR family.

Its subcellular location is the late endosome membrane. The protein localises to the lysosome membrane. In terms of biological role, involved in the dynamics of lysosomal membranes associated with microglial activation following brain lesion. The chain is Monocyte to macrophage differentiation factor from Mus musculus (Mouse).